The sequence spans 185 residues: MINEILQKSEKKMAASLDVLSQELSGIRTGRSSPALVEHIKVEYAGVPTPINHLASIAAPDPRYITIQPWDRSCLSAIEKAIMKSDLGLMPNNDGNIIRLNIPPLSEERRQEMIKMVSKRLEEDKIAMRNVRRDAMDEMKKLEKSKEISQDDLKRGSDQLQKITDSFIAKADKLGADKETELKQV.

It belongs to the RRF family.

Its subcellular location is the cytoplasm. Its function is as follows. Responsible for the release of ribosomes from messenger RNA at the termination of protein biosynthesis. May increase the efficiency of translation by recycling ribosomes from one round of translation to another. The sequence is that of Ribosome-recycling factor from Dehalococcoides mccartyi (strain ATCC BAA-2266 / KCTC 15142 / 195) (Dehalococcoides ethenogenes (strain 195)).